We begin with the raw amino-acid sequence, 216 residues long: Pyridoxine/pyridoxamine 5'-phosphate oxidase (216 aa).

Residues 12–15 (RKSY) and Lys70 contribute to the substrate site. Residues 65-70 (RVVLVK), 80-81 (FT), Arg86, and Lys87 contribute to the FMN site. Positions 127, 131, and 135 each coordinate substrate. Residues 144–145 (QS) and Trp188 contribute to the FMN site. Residue 194–196 (RLH) coordinates substrate. FMN is bound at residue Arg198.

The protein belongs to the pyridoxamine 5'-phosphate oxidase family. Homodimer. Requires FMN as cofactor.

It catalyses the reaction pyridoxamine 5'-phosphate + O2 + H2O = pyridoxal 5'-phosphate + H2O2 + NH4(+). It carries out the reaction pyridoxine 5'-phosphate + O2 = pyridoxal 5'-phosphate + H2O2. The protein operates within cofactor metabolism; pyridoxal 5'-phosphate salvage; pyridoxal 5'-phosphate from pyridoxamine 5'-phosphate: step 1/1. It functions in the pathway cofactor metabolism; pyridoxal 5'-phosphate salvage; pyridoxal 5'-phosphate from pyridoxine 5'-phosphate: step 1/1. Catalyzes the oxidation of either pyridoxine 5'-phosphate (PNP) or pyridoxamine 5'-phosphate (PMP) into pyridoxal 5'-phosphate (PLP). The sequence is that of Pyridoxine/pyridoxamine 5'-phosphate oxidase from Polaromonas sp. (strain JS666 / ATCC BAA-500).